Reading from the N-terminus, the 98-residue chain is uncharacterized protein (98 aa).

An N-terminal signal peptide occupies residues 1–19 (MTERRRALSLAAVVDSINL). Positions 40 to 98 (PPGGSFSGIKRESRRKRPSRNEIYGGGVLEQEVRMRRWSKTASPPVSLHHRPLGPARKP) are disordered. The segment covering 87–98 (LHHRPLGPARKP) has biased composition (basic residues).

This is an uncharacterized protein from Homo sapiens (Human).